The chain runs to 200 residues: Cuticle protein 21.3 (200 aa).

10 repeat units span residues 98 to 101, 104 to 107, 116 to 119, 121 to 124, 133 to 136, 154 to 157, 166 to 169, 178 to 181, 184 to 187, and 196 to 199.

Its function is as follows. Component of the cuticle of migratory locust which contains more than 100 different structural proteins. The sequence is that of Cuticle protein 21.3 from Locusta migratoria (Migratory locust).